Consider the following 77-residue polypeptide: Defensin-B6 (77 aa).

The first 20 residues, 1 to 20 (MKTLFFLSVFIFLLLHLSPG), serve as a signal peptide directing secretion. 3 disulfides stabilise this stretch: C43–C70, C50–C64, and C54–C71.

The protein belongs to the beta-defensin family. Lowly expressed in spleen, kidney and lung.

The protein localises to the secreted. In terms of biological role, has antimicrobial activity. The sequence is that of Defensin-B6 from Ornithorhynchus anatinus (Duckbill platypus).